Here is a 504-residue protein sequence, read N- to C-terminus: 26S proteasome non-ATPase regulatory subunit 5 (504 aa).

A2 is modified (N-acetylalanine).

It belongs to the proteasome subunit S5B/HSM3 family. In terms of assembly, interacts with PSMC1, PSMC2, PSMD1 and PSMD6. Part of transient complex containing PSMD5, PSMC2, PSMC1 and PSMD2 formed during the assembly of the 26S proteasome.

Its function is as follows. Acts as a chaperone during the assembly of the 26S proteasome, specifically of the base subcomplex of the PA700/19S regulatory complex (RC). In the initial step of the base subcomplex assembly is part of an intermediate PSMD5:PSMC2:PSMC1:PSMD2 module which probably assembles with a PSMD10:PSMC4:PSMC5:PAAF1 module followed by dissociation of PSMD5. The protein is 26S proteasome non-ATPase regulatory subunit 5 (PSMD5) of Homo sapiens (Human).